The sequence spans 1189 residues: Pesticidal crystal protein Cry1Ca (1189 aa).

It belongs to the delta endotoxin family.

Promotes colloidosmotic lysis by binding to the midgut epithelial cells of many lepidopteran larvae including Spodoptera species. This is Pesticidal crystal protein Cry1Ca (cry1Ca) from Bacillus thuringiensis subsp. entomocidus.